A 69-amino-acid polypeptide reads, in one-letter code: Large ribosomal subunit protein bL28 (69 aa).

It belongs to the bacterial ribosomal protein bL28 family.

In Desulfovibrio desulfuricans (strain ATCC 27774 / DSM 6949 / MB), this protein is Large ribosomal subunit protein bL28.